The primary structure comprises 397 residues: Elongation factor Tu (397 aa).

Residues 10–207 (KPHVNVGTIG…ACDSYIPDPQ (198 aa)) enclose the tr-type G domain. The G1 stretch occupies residues 19–26 (GHIDHGKT). 19-26 (GHIDHGKT) contacts GTP. Position 26 (threonine 26) interacts with Mg(2+). The G2 stretch occupies residues 60-64 (GITIA). The tract at residues 81 to 84 (DCPG) is G3. GTP is bound by residues 81-85 (DCPGH) and 136-139 (NKCD). The segment at 136–139 (NKCD) is G4. The segment at 174 to 176 (SAL) is G5.

It belongs to the TRAFAC class translation factor GTPase superfamily. Classic translation factor GTPase family. EF-Tu/EF-1A subfamily. As to quaternary structure, monomer.

Its subcellular location is the cytoplasm. It catalyses the reaction GTP + H2O = GDP + phosphate + H(+). In terms of biological role, GTP hydrolase that promotes the GTP-dependent binding of aminoacyl-tRNA to the A-site of ribosomes during protein biosynthesis. The chain is Elongation factor Tu from Lawsonia intracellularis (strain PHE/MN1-00).